Reading from the N-terminus, the 813-residue chain is UPF0508 protein KLLA0A06237g (813 aa).

Positions 478 to 537 (KKDKSKSQKNSTDSLAKLSDTKSIHPPESAMSSHASTPSSTSKSSKSSKSSSTLSPSTCK) are disordered. The span at 506-537 (SAMSSHASTPSSTSKSSKSSKSSSTLSPSTCK) shows a compositional bias: low complexity.

It belongs to the UPF0508 family.

The chain is UPF0508 protein KLLA0A06237g from Kluyveromyces lactis (strain ATCC 8585 / CBS 2359 / DSM 70799 / NBRC 1267 / NRRL Y-1140 / WM37) (Yeast).